Consider the following 251-residue polypeptide: Large ribosomal subunit protein uL16m (251 aa).

The transit peptide at 1–29 (MWRLLTRVPAPLLRMHFSDSWAALPTSAG) directs the protein to the mitochondrion.

This sequence belongs to the universal ribosomal protein uL16 family. Component of the mitochondrial ribosome large subunit (39S) which comprises a 16S rRNA and about 50 distinct proteins.

It localises to the mitochondrion. The protein is Large ribosomal subunit protein uL16m (Mrpl16) of Mus musculus (Mouse).